Here is an 877-residue protein sequence, read N- to C-terminus: Envelope glycoprotein gp160 (877 aa).

Residues 1–19 form the signal peptide; it reads MKLTLLIGILLIGIGVVLN. The Extracellular portion of the chain corresponds to 20 to 707; that stretch reads TRQQWVTVFY…SWFDFSKWLN (688 aa). N-linked (GlcNAc...) asparagine; by host glycosylation is found at asparagine 36, asparagine 69, asparagine 118, asparagine 135, asparagine 148, asparagine 158, asparagine 173, asparagine 204, asparagine 216, asparagine 258, asparagine 261, asparagine 272, asparagine 282, asparagine 288, asparagine 300, asparagine 312, asparagine 322, asparagine 379, asparagine 420, asparagine 431, asparagine 495, and asparagine 498. Intrachain disulfides connect cysteine 102-cysteine 224, cysteine 109-cysteine 215, cysteine 114-cysteine 174, cysteine 237-cysteine 267, and cysteine 247-cysteine 259. The V1 stretch occupies residues 114–173; it reads CVELNSSEPTTTPKSTTASTTNITASTTTLPCVQNKTSTVLESCNETIIEKELNEEPASN. Residues 174–215 are V2; the sequence is CTFAMAGYVRDQKKKYSVVWNDAEIMCKKGNNSNRECYMIHC. Residues 317–349 are V3; that stretch reads CKRPGNKTVLPVTIMAGLVFHSQRYNTRLRQAW. Cysteine 317 and cysteine 350 form a disulfide bridge. 2 cysteine pairs are disulfide-bonded: cysteine 402-cysteine 478 and cysteine 409-cysteine 451. The segment at 409-451 is V4; the sequence is CKMDWFLNYLNNRTVDPDHNPCNGTKGKGKAPGPCAQRTYVAC. Residues 494-501 form a V5 region; it reads KNRTNVTL. Residues 544 to 564 are fusion peptide; the sequence is VPFVLGFLGFLGAAGTAMGAA. Residues 607 to 623 form an immunosuppression region; sequence LNARVTALEKYLEDQAR. Residues asparagine 652 and asparagine 668 are each glycosylated (N-linked (GlcNAc...) asparagine; by host). A coiled-coil region spans residues 668-692; it reads NITTQLEEARAQEEKNLDAYQKLSS. Positions 689–710 are MPER; binding to GalCer; sequence KLSSWSDFWSWFDFSKWLNILK. The helical transmembrane segment at 708-728 threads the bilayer; that stretch reads ILKIGFLDVLGIIGLRLLYTV. The Cytoplasmic segment spans residues 729-877; sequence YSCIARVRQG…VRQGLEGILN (149 aa). The YXXL motif; contains endocytosis signal motif lies at 739-742; that stretch reads YSPL. Residues 751 to 779 are disordered; that stretch reads WKGQPDNAEGPGEGGDKRKNSSEPWQKES.

As to quaternary structure, the mature envelope protein (Env) consists of a homotrimer of non-covalently associated gp120-gp41 heterodimers. The resulting complex protrudes from the virus surface as a spike. Interacts with host CD4 and CCR5. Gp120 also interacts with the C-type lectins CD209/DC-SIGN and CLEC4M/DC-SIGNR (collectively referred to as DC-SIGN(R)). In terms of assembly, the mature envelope protein (Env) consists of a homotrimer of non-covalently associated gp120-gp41 heterodimers. The resulting complex protrudes from the virus surface as a spike. Specific enzymatic cleavages in vivo yield mature proteins. Envelope glycoproteins are synthesized as an inactive precursor that is heavily N-glycosylated and processed likely by host cell furin in the Golgi to yield the mature SU and TM proteins. The cleavage site between SU and TM requires the minimal sequence [KR]-X-[KR]-R.

It is found in the virion membrane. Its subcellular location is the host cell membrane. The protein localises to the host endosome membrane. In terms of biological role, the surface protein gp120 (SU) attaches the virus to the host lymphoid cell by binding to the primary receptor CD4. This interaction induces a structural rearrangement creating a high affinity binding site for a chemokine coreceptor like CCR5. This peculiar 2 stage receptor-interaction strategy allows gp120 to maintain the highly conserved coreceptor-binding site in a cryptic conformation, protected from neutralizing antibodies. These changes are transmitted to the transmembrane protein gp41 and are thought to activate its fusogenic potential by unmasking its fusion peptide. Its function is as follows. Surface protein gp120 (SU) may target the virus to gut-associated lymphoid tissue (GALT) by binding host ITGA4/ITGB7 (alpha-4/beta-7 integrins), a complex that mediates T-cell migration to the GALT. Interaction between gp120 and ITGA4/ITGB7 would allow the virus to enter GALT early in the infection, infecting and killing most of GALT's resting CD4+ T-cells. This T-cell depletion is believed to be the major insult to the host immune system leading to AIDS. The surface protein gp120 is a ligand for CD209/DC-SIGN and CLEC4M/DC-SIGNR, which are respectively found on dendritic cells (DCs), and on endothelial cells of liver sinusoids and lymph node sinuses. These interactions allow capture of viral particles at mucosal surfaces by these cells and subsequent transmission to permissive cells. DCs are professional antigen presenting cells, critical for host immunity by inducing specific immune responses against a broad variety of pathogens. They act as sentinels in various tissues where they take up antigen, process it, and present it to T-cells following migration to lymphoid organs. SIV subverts the migration properties of dendritic cells to gain access to CD4+ T-cells in lymph nodes. Virus transmission to permissive T-cells occurs either in trans (without DCs infection, through viral capture and transmission), or in cis (following DCs productive infection, through the usual CD4-gp120 interaction), thereby inducing a robust infection. In trans infection, bound virions remain infectious over days and it is proposed that they are not degraded, but protected in non-lysosomal acidic organelles within the DCs close to the cell membrane thus contributing to the viral infectious potential during DCs' migration from the periphery to the lymphoid tissues. On arrival at lymphoid tissues, intact virions recycle back to DCs' cell surface allowing virus transmission to CD4+ T-cells. Virion capture also seems to lead to MHC-II-restricted viral antigen presentation, and probably to the activation of SIV-specific CD4+ cells. Functionally, the transmembrane protein gp41 (TM) acts as a class I viral fusion protein. Under the current model, the protein has at least 3 conformational states: pre-fusion native state, pre-hairpin intermediate state, and post-fusion hairpin state. During fusion of viral and target intracellular membranes, the coiled coil regions (heptad repeats) assume a trimer-of-hairpins structure, positioning the fusion peptide in close proximity to the C-terminal region of the ectodomain. The formation of this structure appears to drive apposition and subsequent fusion of viral and target cell membranes. Complete fusion occurs in host cell endosomes. The virus undergoes clathrin-dependent internalization long before endosomal fusion, thus minimizing the surface exposure of conserved viral epitopes during fusion and reducing the efficacy of inhibitors targeting these epitopes. Membranes fusion leads to delivery of the nucleocapsid into the cytoplasm. In terms of biological role, the envelope glycoprotein gp160 precursor down-modulates cell surface CD4 antigen by interacting with it in the endoplasmic reticulum and blocking its transport to the cell surface. Its function is as follows. The gp120-gp41 heterodimer allows rapid transcytosis of the virus through CD4 negative cells such as simple epithelial monolayers of the intestinal, rectal and endocervical epithelial barriers. Both gp120 and gp41 specifically recognize glycosphingolipids galactosyl-ceramide (GalCer) or 3' sulfo-galactosyl-ceramide (GalS) present in the lipid rafts structures of epithelial cells. Binding to these alternative receptors allows the rapid transcytosis of the virus through the epithelial cells. This transcytotic vesicle-mediated transport of virions from the apical side to the basolateral side of the epithelial cells does not involve infection of the cells themselves. This chain is Envelope glycoprotein gp160 (env), found in Cercopithecidae (Old World monkeys).